Here is a 128-residue protein sequence, read N- to C-terminus: Small ribosomal subunit protein uS9 (128 aa).

In terms of assembly, part of the 30S ribosomal subunit. Contacts proteins S7 and S10.

In terms of biological role, part of the top of the head of the 30S subunit. The C-terminal region penetrates the head emerging in the P-site where it contacts tRNA. The protein is Small ribosomal subunit protein uS9 (rpsI) of Thermus thermophilus (strain ATCC 27634 / DSM 579 / HB8).